Reading from the N-terminus, the 763-residue chain is Dual specificity tyrosine-phosphorylation-regulated kinase 1A (763 aa).

Serine 14 is subject to Phosphoserine. A disordered region spans residues 32-57 (GQMPHSHQYSDRRQPNISDQQVSALS). A compositionally biased stretch (polar residues) spans 46–57 (PNISDQQVSALS). Tyrosine 111 is modified (phosphotyrosine; by autocatalysis). The tract at residues 115 to 136 (KKRRHQQGQGDDSSHKKERKVY) is disordered. The short motif at 117 to 134 (RRHQQGQGDDSSHKKERK) is the Bipartite nuclear localization signal element. Tyrosine 140 is modified (phosphotyrosine; by autocatalysis). At tyrosine 145 the chain carries Phosphotyrosine. Tyrosine 159 is subject to Phosphotyrosine; by autocatalysis. Residues 159-479 (YEIDSLIGKG…PYYALQHSFF (321 aa)) enclose the Protein kinase domain. ATP is bound at residue 165 to 173 (IGKGSFGQV). Tyrosine 177 carries the post-translational modification Phosphotyrosine; by autocatalysis. Lysine 188 is an ATP binding site. Tyrosine 219 carries the post-translational modification Phosphotyrosine; by autocatalysis. ATP is bound at residue 238–241 (FEML). Aspartate 287 acts as the Proton acceptor in catalysis. Serine 310 is modified (phosphoserine; by autocatalysis). Residues tyrosine 319 and tyrosine 321 each carry the phosphotyrosine; by autocatalysis modification. Threonine 402 is modified (phosphothreonine; by autocatalysis). Positions 408 to 442 (TKDGKREYKPPGTRKLHNILGVETGGPGGRRAGES) are disordered. Residue tyrosine 449 is modified to Phosphotyrosine; by autocatalysis. Residues 485–501 (EGTNTSNSVSTSPAMEQ) are compositionally biased toward polar residues. 3 disordered regions span residues 485 to 540 (EGTN…HSGG), 596 to 679 (NALH…GNQA), and 744 to 763 (DREE…VASS). Positions 502–525 (SQSSGTTSSTSSSSGGSSGTSNSG) are enriched in low complexity. Serine 529 and serine 538 each carry phosphoserine. Residues 595 to 625 (QNALHHHHGNSSHHHHHHHHHHHHHGQQALG) form a histidine-rich domain (HRD) region. The segment covering 598 to 620 (LHHHHGNSSHHHHHHHHHHHHHG) has biased composition (basic residues). Polar residues predominate over residues 634-645 (NSPTNSSSTQDS). Positions 654–672 (SMTSLSSSTTSSSTSSSST) are enriched in low complexity. Residues serine 748 and serine 758 each carry the phosphoserine modification. Polar residues predominate over residues 754–763 (CVQQSPVASS).

It belongs to the protein kinase superfamily. CMGC Ser/Thr protein kinase family. MNB/DYRK subfamily. Interacts with RAD54L2/ARIP4. Interacts with CRY2. Interacts with RANBP9. Interacts with WDR68. Interacts with SIRT1. As to quaternary structure, (Microbial infection) Interacts with human adenovirus 5 E1A protein. Autophosphorylated on numerous tyrosine residues. Can also autophosphorylate on serine and threonine residues (in vitro). Ubiquitous. Highest levels in skeletal muscle, testis, fetal lung and fetal kidney.

The protein localises to the nucleus. The protein resides in the nucleus speckle. It catalyses the reaction L-seryl-[protein] + ATP = O-phospho-L-seryl-[protein] + ADP + H(+). The enzyme catalyses L-threonyl-[protein] + ATP = O-phospho-L-threonyl-[protein] + ADP + H(+). It carries out the reaction L-tyrosyl-[protein] + ATP = O-phospho-L-tyrosyl-[protein] + ADP + H(+). The catalysed reaction is [DNA-directed RNA polymerase] + ATP = phospho-[DNA-directed RNA polymerase] + ADP + H(+). With respect to regulation, inhibited by RANBP9. Inhibited by harmine, leucettamine B and leucettine L41. In terms of biological role, dual-specificity kinase which possesses both serine/threonine and tyrosine kinase activities. Exhibits a substrate preference for proline at position P+1 and arginine at position P-3. Plays an important role in double-strand breaks (DSBs) repair following DNA damage. Mechanistically, phosphorylates RNF169 and increases its ability to block accumulation of TP53BP1 at the DSB sites thereby promoting homologous recombination repair (HRR). Also acts as a positive regulator of transcription by acting as a CTD kinase that mediates phosphorylation of the CTD (C-terminal domain) of the large subunit of RNA polymerase II (RNAP II) POLR2A. May play a role in a signaling pathway regulating nuclear functions of cell proliferation. Modulates alternative splicing by phosphorylating the splice factor SRSF6. Has pro-survival function and negatively regulates the apoptotic process. Promotes cell survival upon genotoxic stress through phosphorylation of SIRT1. This in turn inhibits p53/TP53 activity and apoptosis. Phosphorylates SEPTIN4, SEPTIN5 and SF3B1 at 'Thr-434'. The sequence is that of Dual specificity tyrosine-phosphorylation-regulated kinase 1A from Homo sapiens (Human).